Here is a 135-residue protein sequence, read N- to C-terminus: Retinol-binding protein 5 (135 aa).

It belongs to the calycin superfamily. Fatty-acid binding protein (FABP) family.

It localises to the cytoplasm. Functionally, intracellular transport of retinol. This chain is Retinol-binding protein 5 (RBP5), found in Pongo abelii (Sumatran orangutan).